The sequence spans 797 residues: LPS-assembly protein LptD (797 aa).

The signal sequence occupies residues 1-30; the sequence is MKEGRKRLRAGYCYMLAGVVGVASTGSSRA.

This sequence belongs to the LptD family. Component of the lipopolysaccharide transport and assembly complex. Interacts with LptE and LptA.

It localises to the cell outer membrane. Together with LptE, is involved in the assembly of lipopolysaccharide (LPS) at the surface of the outer membrane. The sequence is that of LPS-assembly protein LptD from Hahella chejuensis (strain KCTC 2396).